Consider the following 306-residue polypeptide: Pantothenate kinase (306 aa).

90 to 97 (GSVAVGKS) lines the ATP pocket.

The protein belongs to the prokaryotic pantothenate kinase family.

Its subcellular location is the cytoplasm. The enzyme catalyses (R)-pantothenate + ATP = (R)-4'-phosphopantothenate + ADP + H(+). It participates in cofactor biosynthesis; coenzyme A biosynthesis; CoA from (R)-pantothenate: step 1/5. The sequence is that of Pantothenate kinase from Listeria monocytogenes serotype 4b (strain CLIP80459).